The following is a 144-amino-acid chain: MRLNTISPAEGSKPTGKRSGRGIGSGLGKTGGVGHKGQKSRSGGRVKPGFEGGQMPIQRRLPKFGFTSRKSFVTDQVTLAEIAKVDGDTASLETLKAAGLVKKEIQFVKVVKSGEVSRAVTVSGLKVTKGAKEAIEAAGGKVEE.

A disordered region spans residues 1-59; the sequence is MRLNTISPAEGSKPTGKRSGRGIGSGLGKTGGVGHKGQKSRSGGRVKPGFEGGQMPIQR. A compositionally biased stretch (gly residues) spans 21-35; it reads RGIGSGLGKTGGVGH.

It belongs to the universal ribosomal protein uL15 family. In terms of assembly, part of the 50S ribosomal subunit.

Functionally, binds to the 23S rRNA. This chain is Large ribosomal subunit protein uL15, found in Alteromonas mediterranea (strain DSM 17117 / CIP 110805 / LMG 28347 / Deep ecotype).